Reading from the N-terminus, the 104-residue chain is Class I hydrophobin 12 (104 aa).

The N-terminal stretch at 1 to 25 (MFSKATLFFTAAVVIVAAGATPTTS) is a signal peptide. 4 disulfides stabilise this stretch: Cys27/Cys85, Cys34/Cys79, Cys35/Cys67, and Cys86/Cys99.

Belongs to the fungal hydrophobin family. As to quaternary structure, self-assembles to form functional amyloid fibrils called rodlets. Self-assembly into fibrillar rodlets occurs spontaneously at hydrophobic:hydrophilic interfaces and the rodlets further associate laterally to form amphipathic monolayers.

It is found in the secreted. The protein resides in the cell wall. Its function is as follows. Aerial growth, conidiation, and dispersal of filamentous fungi in the environment rely upon a capability of their secreting small amphipathic proteins called hydrophobins (HPBs) with low sequence identity. Class I can self-assemble into an outermost layer of rodlet bundles on aerial cell surfaces, conferring cellular hydrophobicity that supports fungal growth, development and dispersal; whereas Class II form highly ordered films at water-air interfaces through intermolecular interactions but contribute nothing to the rodlet structure. Hydph12 is a class I hydrophobin involved in the formation of mycelium knots. This chain is Class I hydrophobin 12, found in Pleurotus ostreatus (strain PC15) (Oyster mushroom).